Here is a 586-residue protein sequence, read N- to C-terminus: MGGAARERGRKDAALPGAGLPPQQRRLGDGVYDTFMMIDETKCPPYTNTLCNPSEAPVSRRLNITTEPFTRGHTQHFVSGGVMKVEQLFQEFGSRRTSTLQSDGVSNSEKSSPASQGKSSDSLGTVKCSLSSRPSKVLPLTPEQALKQYKHHLTAYEKLEIISYPEIYFVGPNAKKRQGVIGGPNNGGYDDADGAYIHVPRDHLAYRYEVLKIIGKGSFGQVARVYDHKLRQYVALKMVRNEKRFHRQAAEEIRILEHLKKQDKTGSMNVIHMLESFTFRNHVCMAFELLSIDLYELIKKNKFQGFSVQLVRKFAQSILQSLDALHKNKIIHCDLKPENILLKHHGRSATKVIDFGSSCFEYQKLYTYIQSRFYRAPEIILGCRYSTPIDIWSFGCILAELLTGQPLFPGEDEGDQLACMMELLGMPPQKLLEQSKRAKYFINSKGLPRYCSVTTQTDGRVVLLGGRSRRGKKRGPPGSKDWAAALKGCDDYLFIEFLKRCLQWDPSARLTPAQALRHPWISKSAPRPLTTDKVSGKRVVNPTNAFQGLGSKLPPVVGIASKLKANLMSETSGSIPLCSVLPKLIS.

Positions 1 to 13 are enriched in basic and acidic residues; sequence MGGAARERGRKDA. Residues 1–187 are disordered; that stretch reads MGGAARERGR…QGVIGGPNNG (187 aa). The Protein kinase domain maps to 208–521; the sequence is YEVLKIIGKG…PAQALRHPWI (314 aa). Residues 214–222, lysine 237, and 287–290 each bind ATP; these read IGKGSFGQV and FELL. The Proton acceptor role is filled by aspartate 334. Tyrosine 368 carries the phosphotyrosine modification. Positions 467 to 480 match the Nuclear localization signal motif; the sequence is RSRRGKKRGPPGSK.

The protein belongs to the protein kinase superfamily. CMGC Ser/Thr protein kinase family. MNB/DYRK subfamily. In terms of assembly, interacts with SIRT1. The cofactor is Mg(2+). Protein kinase activity is activated following autophosphorylation at Tyr-368. Post-translationally, ubiquitinated at anaphase by the anaphase-promoting complex (APC/C), leading to its degradation by the proteasome. As to expression, expressed predominantly in testis. Expressed in late pachytene spermatocytes.

It is found in the nucleus. Its subcellular location is the cytoplasm. It localises to the nucleus speckle. The protein localises to the cytoplasmic granule. The protein resides in the cytoskeleton. It is found in the microtubule organizing center. Its subcellular location is the centrosome. It catalyses the reaction L-seryl-[protein] + ATP = O-phospho-L-seryl-[protein] + ADP + H(+). It carries out the reaction L-threonyl-[protein] + ATP = O-phospho-L-threonyl-[protein] + ADP + H(+). The catalysed reaction is L-tyrosyl-[protein] + ATP = O-phospho-L-tyrosyl-[protein] + ADP + H(+). With respect to regulation, protein kinase activity is activated following autophosphorylation at Tyr-368. Dual-specificity protein kinase that promotes disassembly of several types of membraneless organelles during mitosis, such as stress granules, nuclear speckles and pericentriolar material. Dual-specificity tyrosine-regulated kinases (DYRKs) autophosphorylate a critical tyrosine residue in their activation loop and phosphorylate their substrate on serine and threonine residues. Acts as a central dissolvase of membraneless organelles during the G2-to-M transition, after the nuclear-envelope breakdown: acts by mediating phosphorylation of multiple serine and threonine residues in unstructured domains of proteins, such as SRRM1 and PCM1. Does not mediate disassembly of all membraneless organelles: disassembly of P-body and nucleolus is not regulated by DYRK3. Dissolution of membraneless organelles at the onset of mitosis is also required to release mitotic regulators, such as ZNF207, from liquid-unmixed organelles where they are sequestered and keep them dissolved during mitosis. Regulates mTORC1 by mediating the dissolution of stress granules: during stressful conditions, DYRK3 partitions from the cytosol to the stress granule, together with mTORC1 components, which prevents mTORC1 signaling. When stress signals are gone, the kinase activity of DYRK3 is required for the dissolution of stress granule and mTORC1 relocation to the cytosol: acts by mediating the phosphorylation of the mTORC1 inhibitor AKT1S1, allowing full reactivation of mTORC1 signaling. Also acts as a negative regulator of EPO-dependent erythropoiesis: may place an upper limit on red cell production during stress erythropoiesis. Inhibits cell death due to cytokine withdrawal in hematopoietic progenitor cells. Promotes cell survival upon genotoxic stress through phosphorylation of SIRT1: this in turn inhibits p53/TP53 activity and apoptosis. In Rattus norvegicus (Rat), this protein is Dual specificity tyrosine-phosphorylation-regulated kinase 3.